The primary structure comprises 686 residues: Glycine--tRNA ligase beta subunit (686 aa).

The interval Ala-65–Thr-99 is disordered. Residues Ser-67–Glu-84 show a composition bias toward basic and acidic residues.

Belongs to the class-II aminoacyl-tRNA synthetase family. As to quaternary structure, tetramer of two alpha and two beta subunits.

Its subcellular location is the cytoplasm. It catalyses the reaction tRNA(Gly) + glycine + ATP = glycyl-tRNA(Gly) + AMP + diphosphate. The sequence is that of Glycine--tRNA ligase beta subunit from Leuconostoc citreum (strain KM20).